The following is a 483-amino-acid chain: Glutamyl-tRNA(Gln) amidotransferase subunit A (483 aa).

Catalysis depends on charge relay system residues Lys-77 and Ser-152. The active-site Acyl-ester intermediate is Ser-176.

The protein belongs to the amidase family. GatA subfamily. Heterotrimer of A, B and C subunits.

The catalysed reaction is L-glutamyl-tRNA(Gln) + L-glutamine + ATP + H2O = L-glutaminyl-tRNA(Gln) + L-glutamate + ADP + phosphate + H(+). Allows the formation of correctly charged Gln-tRNA(Gln) through the transamidation of misacylated Glu-tRNA(Gln) in organisms which lack glutaminyl-tRNA synthetase. The reaction takes place in the presence of glutamine and ATP through an activated gamma-phospho-Glu-tRNA(Gln). This chain is Glutamyl-tRNA(Gln) amidotransferase subunit A, found in Listeria welshimeri serovar 6b (strain ATCC 35897 / DSM 20650 / CCUG 15529 / CIP 8149 / NCTC 11857 / SLCC 5334 / V8).